The chain runs to 378 residues: Erythronate-4-phosphate dehydrogenase (378 aa).

Substrate-binding residues include Ser-45 and Thr-67. Residue Asp-147 participates in NAD(+) binding. Arg-209 is an active-site residue. Asp-233 provides a ligand contact to NAD(+). Glu-238 is a catalytic residue. The active-site Proton donor is His-255. Gly-258 provides a ligand contact to NAD(+). Tyr-259 is a binding site for substrate.

Belongs to the D-isomer specific 2-hydroxyacid dehydrogenase family. PdxB subfamily. In terms of assembly, homodimer.

The protein resides in the cytoplasm. It catalyses the reaction 4-phospho-D-erythronate + NAD(+) = (R)-3-hydroxy-2-oxo-4-phosphooxybutanoate + NADH + H(+). It participates in cofactor biosynthesis; pyridoxine 5'-phosphate biosynthesis; pyridoxine 5'-phosphate from D-erythrose 4-phosphate: step 2/5. Catalyzes the oxidation of erythronate-4-phosphate to 3-hydroxy-2-oxo-4-phosphonooxybutanoate. The chain is Erythronate-4-phosphate dehydrogenase from Shewanella denitrificans (strain OS217 / ATCC BAA-1090 / DSM 15013).